The following is a 315-amino-acid chain: ATLTVPTTVPSVSEDCEQLRKAFSGWGTNEGLIIDILGHRNAEQRNLIRKTYAETYGEDLLKALDKELSNDFERLVLLWALDPAERDALLANEATKRWTSSNQVLMEIACTRSANQLLHARQAYHARYKKSLEEDVAHHTTGDFHKLLLPLVSSYRYEGEEVNMTLAKTEAKLLHEKISNKAYSDDDVIRVLATRSKAQINATLNHYKNEYGNDINKDLKADPKDEFLALLRSTVKCLVYPEKYFEKVLRLAINRRGTDEGALTRVVCTRAEVDLKVIADEYQRRNSVPLTRAIVKDTHGDYEKLLLVLAGHVEN.

Annexin repeat units lie at residues 10–81 (PSVS…LWAL), 82–153 (DPAE…PLVS), 165–236 (TLAK…STVK), and 240–311 (YPEK…VLAG). Ca(2+) is bound by residues Phe23, Gly25, Gly27, and Glu67. Ca(2+)-binding residues include Ile253, Arg255, Gly257, Val295, Asp297, Thr298, and Glu303.

It belongs to the annexin family. In terms of assembly, monomer. Trimer. Oligomerization is calcium-independent. Disassembly of the oligomers seems to be required for calcium-binding.

It is found in the membrane. Functionally, binds to phospholipid vesicles in a calcium-dependent manner in vitro. Prefers phosphatidyl-serine containing membranes. May have a role in the membrane cytoskeleton scaffolding or exocytotic processes. May be involved in oxidative stress response. The sequence is that of Annexin Gh1 from Gossypium hirsutum (Upland cotton).